A 180-amino-acid chain; its full sequence is KxDL motif-containing protein 1 (180 aa).

Composition is skewed to polar residues over residues 126 to 144 (TTIA…SPSI) and 158 to 170 (QAPS…NGQI). Residues 126–180 (TTIATSEQSTESCDTSPSIISPAMSQDFEDLSQAPSDTPSVNGQILTDEEVVHED) form a disordered region.

The protein belongs to the KXD1 family. As to quaternary structure, associates with the BLOC-1 complex.

It is found in the lysosome membrane. Functionally, as part of a BORC-like complex may play a role in lysosomes movement and localization at the cell periphery. Associated with the cytosolic face of lysosomes, this complex may couple lysosomes to microtubule plus-end-directed kinesin motor. May also be involved in the biogenesis of lysosome-related organelles such as melanosomes. The polypeptide is KxDL motif-containing protein 1 (kxd1) (Xenopus tropicalis (Western clawed frog)).